Consider the following 220-residue polypeptide: Imidazoleglycerol-phosphate dehydratase (220 aa).

Substrate is bound by residues glutamate 14, 64–72, 90–94, arginine 116, and arginine 138; these read HMIHALAKH and HHTTE. The Mn(2+) site is built by histidine 64, histidine 90, histidine 91, and glutamate 94. Histidine 162, histidine 186, histidine 187, and glutamate 190 together coordinate Mn(2+). Substrate contacts are provided by residues 186-194 and 214-216; these read HHRSESAFK and STK.

This sequence belongs to the imidazoleglycerol-phosphate dehydratase family. It depends on Mn(2+) as a cofactor.

It catalyses the reaction D-erythro-1-(imidazol-4-yl)glycerol 3-phosphate = 3-(imidazol-4-yl)-2-oxopropyl phosphate + H2O. It functions in the pathway amino-acid biosynthesis; L-histidine biosynthesis; L-histidine from 5-phospho-alpha-D-ribose 1-diphosphate: step 6/9. This is Imidazoleglycerol-phosphate dehydratase from Saccharomyces cerevisiae (strain ATCC 204508 / S288c) (Baker's yeast).